The primary structure comprises 287 residues: Nitrogenase iron protein (287 aa).

8–15 (GKGGIGKS) contacts ATP. C96 lines the [4Fe-4S] cluster pocket. R99 carries the ADP-ribosylarginine; by dinitrogenase reductase ADP-ribosyltransferase modification. C130 contacts [4Fe-4S] cluster.

The protein belongs to the NifH/BchL/ChlL family. Homodimer. Requires [4Fe-4S] cluster as cofactor. Post-translationally, the reversible ADP-ribosylation of Arg-99 inactivates the nitrogenase reductase and regulates nitrogenase activity.

It carries out the reaction N2 + 8 reduced [2Fe-2S]-[ferredoxin] + 16 ATP + 16 H2O = H2 + 8 oxidized [2Fe-2S]-[ferredoxin] + 2 NH4(+) + 16 ADP + 16 phosphate + 6 H(+). Its function is as follows. The key enzymatic reactions in nitrogen fixation are catalyzed by the nitrogenase complex, which has 2 components: the iron protein and the molybdenum-iron protein. The chain is Nitrogenase iron protein from Frankia casuarinae (strain DSM 45818 / CECT 9043 / HFP020203 / CcI3).